The primary structure comprises 270 residues: Hematopoietically-expressed homeobox protein HHEX (270 aa).

Residues Met-1–Arg-137 form an interaction with SOX13 region. Ser-53 is modified (phosphoserine). A DNA-binding region (homeobox) is located at residues Arg-137–Lys-196. Residues Arg-137–Gly-270 form a required for WNT signaling induction region. The interval Arg-194 to Gly-270 is disordered. The span at Pro-222–Ala-241 shows a compositional bias: polar residues. The segment covering Glu-244 to Ile-260 has biased composition (acidic residues).

In terms of assembly, interacts with CD81; the interaction prevents nuclear translocation of HHEX. Interacts (via N-terminus) with SOX13; abolishes the SOX13-mediated inhibition of WNT-mediated transcriptional activity via competitive inhibition of the SOX13-TCF7 complex. Interacts with EIF4E; the interaction inhibits EIF4E-mediated mRNA nuclear export. Liver and promyelocytic leukemia cell line HL-60.

The protein localises to the nucleus. It localises to the nuclear body. Its subcellular location is the cytoplasm. In terms of biological role, recognizes the DNA sequence 5'-ATTAA-3'. Transcriptional repressor. Activator of WNT-mediated transcription in conjunction with CTNNB1. Establishes anterior identity at two levels; acts early to enhance canonical WNT-signaling by repressing expression of TLE4, and acts later to inhibit NODAL-signaling by directly targeting NODAL. Inhibits EIF4E-mediated mRNA nuclear export. May play a role in hematopoietic differentiation. The sequence is that of Hematopoietically-expressed homeobox protein HHEX (HHEX) from Homo sapiens (Human).